The sequence spans 220 residues: MAILFAVVARGTTILAKHAWCGGNFLEVTEQILAKIPSENNKLTYSHGNYLFHYICQDRIVYLCITDDDFERSRAFNFLNEIKKRFQTTYGSRAQTALPYAMNSEFSSVLAAQLKHHSENKGLDKVMETQAQVDELKGIMVRNIDLVAQRGERLELLIDKTENLVDSSVTFKTTSRNLARAMCMKNLKLTIIIIIVSIVFIYIIVSPLCGGFTWPSCVKK.

Alanine 2 is subject to N-acetylalanine; partial. Topologically, residues 2–188 are cytoplasmic; the sequence is AILFAVVARG…ARAMCMKNLK (187 aa). Residues 7–110 enclose the Longin domain; that stretch reads VVARGTTILA…AMNSEFSSVL (104 aa). Positions 125–185 constitute a v-SNARE coiled-coil homology domain; sequence KVMETQAQVD…RNLARAMCMK (61 aa). Serine 167 and serine 168 each carry phosphoserine. Residues 189-209 traverse the membrane as a helical; Anchor for type IV membrane protein segment; that stretch reads LTIIIIIVSIVFIYIIVSPLC. Over 210–220 the chain is Vesicular; sequence GGFTWPSCVKK.

Belongs to the synaptobrevin family. In terms of assembly, component of the SNARE complex composed of STX4, SNAP23 and VAMP7 that binds SYT7 during lysosomal exocytosis. Component of the SNARE complex composed of STX7, STX8, VAMP7 and VTI1B that is required for heterotypic fusion of late endosomes with lysosomes. May interact with STX17. Interacts with PICALM. Interacts with RAB21. In terms of tissue distribution, detected in all tissues tested.

It localises to the cytoplasmic vesicle. The protein resides in the secretory vesicle membrane. Its subcellular location is the golgi apparatus. It is found in the trans-Golgi network membrane. The protein localises to the late endosome membrane. It localises to the lysosome membrane. The protein resides in the endoplasmic reticulum membrane. Its subcellular location is the phagosome membrane. It is found in the synapse. The protein localises to the synaptosome. Functionally, involved in the targeting and/or fusion of transport vesicles to their target membrane during transport of proteins from the early endosome to the lysosome. Required for heterotypic fusion of late endosomes with lysosomes and homotypic lysosomal fusion. Required for calcium regulated lysosomal exocytosis. Involved in the export of chylomicrons from the endoplasmic reticulum to the cis Golgi. Required for exocytosis of mediators during eosinophil and neutrophil degranulation, and target cell killing by natural killer cells. Required for focal exocytosis of late endocytic vesicles during phagosome formation. This Homo sapiens (Human) protein is Vesicle-associated membrane protein 7 (VAMP7).